The primary structure comprises 207 residues: Outer-membrane lipoprotein carrier protein (207 aa).

The signal sequence occupies residues 1–21 (MRLIRMLLLPVLAVTTLSAHA).

Belongs to the LolA family. As to quaternary structure, monomer.

Its subcellular location is the periplasm. Its function is as follows. Participates in the translocation of lipoproteins from the inner membrane to the outer membrane. Only forms a complex with a lipoprotein if the residue after the N-terminal Cys is not an aspartate (The Asp acts as a targeting signal to indicate that the lipoprotein should stay in the inner membrane). The sequence is that of Outer-membrane lipoprotein carrier protein from Pseudomonas fluorescens (strain ATCC BAA-477 / NRRL B-23932 / Pf-5).